The primary structure comprises 770 residues: MGDYTAEFTPDEQALIDAEFARLSDSTYLDHAGTTLYAHNQVSDAAQQLQRDVICNPHTCRVTGDYVDQVRYKILEFFNTNADEYHVVFTANASAALRLVADHFDFGTNGNFHYCQENHTSVLGMRQLVSANRIYMLTKDQILLNNGTPAGATAAAATAHSDNSLVVFSAQCNFSGYKMPLTVIEKIQQDGLREPGKCIDCKLQSDPGQSNYYVCLDAASYAASSPLDLRRHRPDYVCLSFYKIFGYPTGVGALLVSKRGAELLKKRFYGGGTVNFAYPHTMEHQLRSTFHERFEDGTLPFLSIVELLQGFQTLQRLVPGRSMERISRHVHSLARYCEQQLLQMQYPNGAPLVTLYNHAGYEDRMQQGGIVAFNVRTAAGDYVGFGEIASVAALHRILLRTGCFCNVGACQHFMNLNGDAMDAIYKLAGRICGDYYDLLDGRPTGAVRVSFGYMTRLQDVDRLLQMLRDSYLSVKWHQRLDFIEQRVQQLPKLLQQRAQQLRPQLLQLAIYPVKSCAALKMPASALTDQGLQYDREWMIVDLNGMALTQKRCTDLCLIQPRIVADQLQLHFNGDGSTTFVSVPLSLTDQATNSARCQSKVCRQSVEGYDCGDEVANWLCQQLGLDGLRLLRQSAQRRAPGDRQQLSLVNQAQFLLVNRASVRSLGFEEPLDETVDRFRSNIVIDTGVPFEELEFGQLRIGEVLFQVEGPCQRCDMICINQRTGQRSPDTLTTIARIQSGKMRFGIYISRLPNENRMQPQLACGDPITVLR.

Lys-243 is modified (N6-(pyridoxal phosphate)lysine). The active site involves Cys-405. The MOSC domain occupies 611-769; sequence GDEVANWLCQ…LACGDPITVL (159 aa). Ser-726 bears the Phosphoserine mark.

The protein belongs to the class-V pyridoxal-phosphate-dependent aminotransferase family. MOCOS subfamily. Pyridoxal 5'-phosphate is required as a cofactor.

It catalyses the reaction Mo-molybdopterin + L-cysteine + AH2 = thio-Mo-molybdopterin + L-alanine + A + H2O. The protein operates within cofactor biosynthesis; molybdopterin biosynthesis. In terms of biological role, sulfurates the molybdenum cofactor. Sulfation of molybdenum is essential for xanthine dehydrogenase (XDH) and aldehyde oxidase (ADO) enzymes in which molybdenum cofactor is liganded by 1 oxygen and 1 sulfur atom in active form. The polypeptide is Molybdenum cofactor sulfurase (Drosophila grimshawi (Hawaiian fruit fly)).